Here is a 315-residue protein sequence, read N- to C-terminus: Borealin (315 aa).

Disordered stretches follow at residues 103–126 and 138–226; these read IEGH…GASG and LRST…TPPM. A Phosphothreonine modification is found at T146. S152 bears the Phosphoserine mark. The span at 153-162 shows a compositional bias: basic residues; sequence ARARRARRSR. A Phosphoserine modification is found at S163. Positions 178–188 are enriched in low complexity; the sequence is SISSSSSSSRN. S205 is modified (phosphoserine). T209 is modified (phosphothreonine). Phosphoserine is present on residues S218, S220, and S244.

The protein belongs to the borealin family. In terms of assembly, component of the CPC complex. As to expression, ubiquitously expressed in the early embryo. Expression is restricted to the ventral nerve cord and brain during later embryonic stages.

It localises to the nucleus. Its subcellular location is the chromosome. The protein resides in the centromere. It is found in the cytoplasm. The protein localises to the cytoskeleton. It localises to the spindle. Its function is as follows. Component of the chromosomal passenger complex (CPC), a complex that acts as a key regulator of embryonic mitosis. The CPC complex has essential functions at the centromere for ensuring sister chromatid cohesion, recruitment of the CPC to kinetochores, and chromosome alignment and segregation. There is no function in meiotic histone phosphorylation or spindle formation. This chain is Borealin (borr), found in Drosophila melanogaster (Fruit fly).